Consider the following 102-residue polypeptide: Small ribosomal subunit protein uS10 (102 aa).

This sequence belongs to the universal ribosomal protein uS10 family. As to quaternary structure, part of the 30S ribosomal subunit.

Functionally, involved in the binding of tRNA to the ribosomes. The polypeptide is Small ribosomal subunit protein uS10 (Frankia alni (strain DSM 45986 / CECT 9034 / ACN14a)).